The chain runs to 179 residues: ATP synthase subunit delta (179 aa).

It belongs to the ATPase delta chain family. In terms of assembly, F-type ATPases have 2 components, F(1) - the catalytic core - and F(0) - the membrane proton channel. F(1) has five subunits: alpha(3), beta(3), gamma(1), delta(1), epsilon(1). F(0) has three main subunits: a(1), b(2) and c(10-14). The alpha and beta chains form an alternating ring which encloses part of the gamma chain. F(1) is attached to F(0) by a central stalk formed by the gamma and epsilon chains, while a peripheral stalk is formed by the delta and b chains.

The protein localises to the cell inner membrane. F(1)F(0) ATP synthase produces ATP from ADP in the presence of a proton or sodium gradient. F-type ATPases consist of two structural domains, F(1) containing the extramembraneous catalytic core and F(0) containing the membrane proton channel, linked together by a central stalk and a peripheral stalk. During catalysis, ATP synthesis in the catalytic domain of F(1) is coupled via a rotary mechanism of the central stalk subunits to proton translocation. Functionally, this protein is part of the stalk that links CF(0) to CF(1). It either transmits conformational changes from CF(0) to CF(1) or is implicated in proton conduction. This chain is ATP synthase subunit delta, found in Burkholderia cenocepacia (strain ATCC BAA-245 / DSM 16553 / LMG 16656 / NCTC 13227 / J2315 / CF5610) (Burkholderia cepacia (strain J2315)).